The primary structure comprises 506 residues: Radiation-sensitive protein 28 (506 aa).

5 WD repeats span residues 55 to 94 (PLSI…HRND), 193 to 233 (HHKY…AVQD), 285 to 325 (RMQS…RLYS), 357 to 396 (AHLR…LQPE), and 404 to 451 (LGTQ…LWNK).

The protein resides in the nucleus. In terms of biological role, involved in transcription-coupled repair nucleotide excision repair (NER) of UV-induced DNA lesions. This is Radiation-sensitive protein 28 (RAD28) from Saccharomyces cerevisiae (strain ATCC 204508 / S288c) (Baker's yeast).